We begin with the raw amino-acid sequence, 445 residues long: uncharacterized protein (445 aa).

8 helical membrane-spanning segments follow: residues 16–36 (IVSL…AFLI), 52–72 (LLAS…GYLL), 98–118 (VHSL…AGGC), 168–188 (GLMF…LGIV), 219–239 (ASAL…VWLI), 243–263 (GWSV…GALG), 283–303 (LIAA…NEGS), and 366–386 (AAYP…VPLV). A disordered region spans residues 417–445 (AWPNGPRRPGPPGQPRRVRQGGTAITPPT).

It belongs to the major facilitator superfamily.

The protein localises to the cell membrane. This is an uncharacterized protein from Mycobacterium tuberculosis (strain ATCC 25618 / H37Rv).